We begin with the raw amino-acid sequence, 354 residues long: DNA polymerase IV (354 aa).

In terms of domain architecture, UmuC spans 14 to 198; it reads IIHIDMDAFF…MDIAKFHGVG (185 aa). Aspartate 18 and aspartate 116 together coordinate Mg(2+). Residue glutamate 117 is part of the active site.

It belongs to the DNA polymerase type-Y family. In terms of assembly, monomer. Mg(2+) serves as cofactor.

The protein resides in the cytoplasm. It catalyses the reaction DNA(n) + a 2'-deoxyribonucleoside 5'-triphosphate = DNA(n+1) + diphosphate. Poorly processive, error-prone DNA polymerase involved in untargeted mutagenesis. Copies undamaged DNA at stalled replication forks, which arise in vivo from mismatched or misaligned primer ends. These misaligned primers can be extended by PolIV. Exhibits no 3'-5' exonuclease (proofreading) activity. May be involved in translesional synthesis, in conjunction with the beta clamp from PolIII. The polypeptide is DNA polymerase IV (Streptococcus gordonii (strain Challis / ATCC 35105 / BCRC 15272 / CH1 / DL1 / V288)).